The primary structure comprises 68 residues: Kunitz-type serine protease inhibitor PPTI (68 aa).

The residue at position 1 (E1) is a Pyrrolidone carboxylic acid (Glu). The BPTI/Kunitz inhibitor domain occupies 7 to 57 (CYLPDDPGVCKAHIPRFYYNPASNKCKEFIYGGCGGNANNFETRAECRHTC). Intrachain disulfides connect C7-C57, C16-C40, and C32-C53.

In terms of tissue distribution, expressed by the venom gland.

The protein localises to the secreted. Functionally, serine protease inhibitor that weakly inhibits trypsin (Ki=0.2 uM). May have potassium channel blocking activities. The sequence is that of Kunitz-type serine protease inhibitor PPTI from Pseudocerastes persicus (Persian horned viper).